The primary structure comprises 351 residues: tRNA (guanine(10)-N2)-dimethyltransferase (351 aa).

The THUMP domain maps to 57-165 (EGHRIIFRYN…ENTFFISNVL (109 aa)).

It belongs to the methyltransferase superfamily. Trm-G10 family. Monomer.

The protein localises to the cytoplasm. It carries out the reaction guanosine(10) in tRNA + 2 S-adenosyl-L-methionine = N(2)-dimethylguanosine(10) in tRNA + 2 S-adenosyl-L-homocysteine + 2 H(+). Its function is as follows. Catalyzes the adenosylmethionine-dependent methylation of the exocyclic amino group (N(2)) of guanosine at position 10 of various tRNAs. Acts via a two-step process that leads to the formation of either N(2)-monomethyl (m(2)G) or N(2)-dimethylguanosine (m(2)(2)G). The sequence is that of tRNA (guanine(10)-N2)-dimethyltransferase (trmG10) from Methanocaldococcus jannaschii (strain ATCC 43067 / DSM 2661 / JAL-1 / JCM 10045 / NBRC 100440) (Methanococcus jannaschii).